A 448-amino-acid chain; its full sequence is Fibulin-5 (448 aa).

The first 23 residues, 1-23 (MPGIKRILTVTILALCLPSPGNA), serve as a signal peptide directing secretion. In terms of domain architecture, EGF-like 1; calcium-binding spans 42-82 (DIDECRTIPEACRGDMMCVNQNGRYLCIPRTNPVYRGPYSN). Cystine bridges form between Cys-46–Cys-59, Cys-53–Cys-68, Cys-131–Cys-144, Cys-138–Cys-153, Cys-155–Cys-166, Cys-172–Cys-181, Cys-177–Cys-190, Cys-192–Cys-205, Cys-211–Cys-221, Cys-217–Cys-230, Cys-232–Cys-245, Cys-251–Cys-262, Cys-258–Cys-271, Cys-273–Cys-286, Cys-292–Cys-305, Cys-299–Cys-314, and Cys-320–Cys-332. Residues 54–56 (RGD) carry the Cell attachment site motif. An EGF-like 2; calcium-binding domain is found at 127–167 (DVDECATDSHQCNPTQICINTEGGYTCSCTDGYWLLEGQCL). Residues 168–206 (DIDECRYGYCQQLCANVPGSYSCTCNPGFTLNEDGRSCQ) enclose the EGF-like 3; calcium-binding domain. An EGF-like 4; calcium-binding domain is found at 207–246 (DVNECATENPCVQTCVNTYGSFICRCDPGYELEEDGVHCS). The interaction with LOXL1 stretch occupies residues 245 to 448 (CSDMDECSFS…LRIYVSQYPF (204 aa)). Residues 247-287 (DMDECSFSEFLCQHECVNQPGTYFCSCPPGYILLDDNRSCQ) enclose the EGF-like 5; calcium-binding domain. Asn-283 and Asn-296 each carry an N-linked (GlcNAc...) asparagine glycan. The EGF-like 6; calcium-binding domain occupies 288–333 (DINECEHRNHTCNLQQTCYNLQGGFKCIDPIRCEEPYLRISDNRCM).

This sequence belongs to the fibulin family. Homodimer. Monomer, homodimerizes in presence of Ca(2+). Interacts with ELN. Interacts (via N-terminus) with the integrins ITGAV/ITGB3, ITGAV/ITGB5 and ITGA9/ITGB1. Interacts with FBN1 (via N-terminal domain). Forms a ternary complex with ELN and FBN1. Interacts with EFEMP2 with moderate affinity. Interacts with LOXL1. Post-translationally, N-glycosylated.

It localises to the secreted. Its subcellular location is the extracellular space. The protein resides in the extracellular matrix. Its function is as follows. Essential for elastic fiber formation, is involved in the assembly of continuous elastin (ELN) polymer and promotes the interaction of microfibrils and ELN. Stabilizes and organizes elastic fibers in the skin, lung and vasculature. Promotes adhesion of endothelial cells through interaction of integrins and the RGD motif. Vascular ligand for integrin receptors which may play a role in vascular development and remodeling. May act as an adapter that mediates the interaction between FBN1 and ELN. In Pongo abelii (Sumatran orangutan), this protein is Fibulin-5 (FBLN5).